Reading from the N-terminus, the 216-residue chain is LexA repressor (216 aa).

Positions 28–48 (RAEIAAEFGFSSPNAAEEHLR) form a DNA-binding region, H-T-H motif. Active-site for autocatalytic cleavage activity residues include serine 134 and lysine 171.

It belongs to the peptidase S24 family. Homodimer.

It catalyses the reaction Hydrolysis of Ala-|-Gly bond in repressor LexA.. Functionally, represses a number of genes involved in the response to DNA damage (SOS response), including recA and lexA. In the presence of single-stranded DNA, RecA interacts with LexA causing an autocatalytic cleavage which disrupts the DNA-binding part of LexA, leading to derepression of the SOS regulon and eventually DNA repair. The sequence is that of LexA repressor from Ralstonia pickettii (strain 12J).